The sequence spans 216 residues: Cytidylate kinase (216 aa).

7–15 (GPSGTGKST) lines the ATP pocket.

This sequence belongs to the cytidylate kinase family. Type 1 subfamily.

The protein localises to the cytoplasm. The enzyme catalyses CMP + ATP = CDP + ADP. The catalysed reaction is dCMP + ATP = dCDP + ADP. The sequence is that of Cytidylate kinase from Chlamydia trachomatis serovar A (strain ATCC VR-571B / DSM 19440 / HAR-13).